Consider the following 165-residue polypeptide: uncharacterized protein (165 aa).

A disordered region spans residues 68-107; it reads LEGAPEWAAPHPEEQRRSPPACSQHTPPLPSTPTGPPPCS. Positions 94-107 are enriched in pro residues; sequence PPLPSTPTGPPPCS.

This is an uncharacterized protein from Homo sapiens (Human).